Here is a 180-residue protein sequence, read N- to C-terminus: Trafficking protein particle complex subunit 3 (180 aa).

Cysteine 68 carries S-palmitoyl cysteine lipidation.

This sequence belongs to the TRAPP small subunits family. BET3 subfamily. Homodimer. Component of the multisubunit transport protein particle (TRAPP) complex, which includes at least TRAPPC2, TRAPPC2L, TRAPPC3, TRAPPC3L, TRAPPC4, TRAPPC5, TRAPPC8, TRAPPC9, TRAPPC10, TRAPPC11 and TRAPPC12. Heterodimer with TRAPPC6A. The heterodimer TRAPPC3-TRAPPC6A interacts with TRAPPC2L. Heterodimer with TRAPPC6b. The heterodimer TRAPPC6B-TRAPPC3 interacts with TRAPPC1 likely providing a core for TRAPP complex formation.

The protein localises to the golgi apparatus. It is found in the cis-Golgi network. It localises to the endoplasmic reticulum. In terms of biological role, may play a role in vesicular transport from endoplasmic reticulum to Golgi. The sequence is that of Trafficking protein particle complex subunit 3 from Homo sapiens (Human).